Here is a 96-residue protein sequence, read N- to C-terminus: Aspartyl/glutamyl-tRNA(Asn/Gln) amidotransferase subunit C (96 aa).

It belongs to the GatC family. As to quaternary structure, heterotrimer of A, B and C subunits.

The enzyme catalyses L-glutamyl-tRNA(Gln) + L-glutamine + ATP + H2O = L-glutaminyl-tRNA(Gln) + L-glutamate + ADP + phosphate + H(+). The catalysed reaction is L-aspartyl-tRNA(Asn) + L-glutamine + ATP + H2O = L-asparaginyl-tRNA(Asn) + L-glutamate + ADP + phosphate + 2 H(+). Its function is as follows. Allows the formation of correctly charged Asn-tRNA(Asn) or Gln-tRNA(Gln) through the transamidation of misacylated Asp-tRNA(Asn) or Glu-tRNA(Gln) in organisms which lack either or both of asparaginyl-tRNA or glutaminyl-tRNA synthetases. The reaction takes place in the presence of glutamine and ATP through an activated phospho-Asp-tRNA(Asn) or phospho-Glu-tRNA(Gln). This is Aspartyl/glutamyl-tRNA(Asn/Gln) amidotransferase subunit C from Exiguobacterium sibiricum (strain DSM 17290 / CCUG 55495 / CIP 109462 / JCM 13490 / 255-15).